The primary structure comprises 112 residues: Omega-agatoxin-1A (112 aa).

An N-terminal signal peptide occupies residues 1–19 (MMKFVVFLACLFVAAHSFA). A propeptide spanning residues 20 to 36 (VEGEEEYFEAEVPELER) is cleaved from the precursor. The propeptide at 103–109 (RSEESER) is glu-rich.

It belongs to the neurotoxin 04 (omega-agtx) family. 01 (type I omega-agtx) subfamily. Heterodimer of two subunits, a major chain and a minor chain, linked by a disulfide bond. Proteolytically processed to yield the major and the minor chains. In terms of tissue distribution, expressed by the venom gland.

The protein resides in the secreted. Omega-agatoxins are antagonists of voltage-gated calcium channels. They block insect neuromuscular transmission presynaptically. This toxin is a blocker of L-type calcium channels (Cav/CACNA1). This Agelenopsis aperta (North American funnel-web spider) protein is Omega-agatoxin-1A.